The following is a 576-amino-acid chain: Arginine--tRNA ligase (576 aa).

The 'HIGH' region signature appears at 126-136; the sequence is ANPTGPMHIGH.

This sequence belongs to the class-I aminoacyl-tRNA synthetase family. Monomer.

The protein localises to the cytoplasm. The enzyme catalyses tRNA(Arg) + L-arginine + ATP = L-arginyl-tRNA(Arg) + AMP + diphosphate. This is Arginine--tRNA ligase from Rickettsia rickettsii (strain Iowa).